The sequence spans 319 residues: ATP-dependent 6-phosphofructokinase (319 aa).

Glycine 11 provides a ligand contact to ATP. An ADP-binding site is contributed by arginine 21–arginine 25. ATP is bound by residues arginine 72–cysteine 73 and glycine 102–serine 105. Residue aspartate 103 coordinates Mg(2+). Threonine 125–aspartate 127 lines the substrate pocket. Aspartate 127 acts as the Proton acceptor in catalysis. Arginine 154 serves as a coordination point for ADP. Residues arginine 162 and methionine 169 to arginine 171 each bind substrate. ADP-binding positions include glycine 185 to glutamate 187, arginine 211, and lysine 213 to histidine 215. Substrate contacts are provided by residues glutamate 222, arginine 243, and histidine 249–arginine 252.

It belongs to the phosphofructokinase type A (PFKA) family. ATP-dependent PFK group I subfamily. Prokaryotic clade 'B1' sub-subfamily. As to quaternary structure, homotetramer. It depends on Mg(2+) as a cofactor.

The protein localises to the cytoplasm. It carries out the reaction beta-D-fructose 6-phosphate + ATP = beta-D-fructose 1,6-bisphosphate + ADP + H(+). The protein operates within carbohydrate degradation; glycolysis; D-glyceraldehyde 3-phosphate and glycerone phosphate from D-glucose: step 3/4. Its activity is regulated as follows. Allosterically activated by ADP and other diphosphonucleosides, and allosterically inhibited by phosphoenolpyruvate. Catalyzes the phosphorylation of D-fructose 6-phosphate to fructose 1,6-bisphosphate by ATP, the first committing step of glycolysis. This is ATP-dependent 6-phosphofructokinase from Shouchella clausii (strain KSM-K16) (Alkalihalobacillus clausii).